A 263-amino-acid chain; its full sequence is Undecaprenyl-diphosphatase 2 (263 aa).

The next 8 helical transmembrane spans lie at 17-37 (TEFL…LIGF), 42-62 (AKVF…VIFW), 83-103 (LHII…HSAI), 106-126 (VLFG…LMIV), 142-162 (ITYK…WPGF), 183-203 (AEYT…LDLI), 216-236 (LFAT…VSFL), and 242-262 (VKLT…YFFI).

It belongs to the UppP family.

The protein resides in the cell membrane. It catalyses the reaction di-trans,octa-cis-undecaprenyl diphosphate + H2O = di-trans,octa-cis-undecaprenyl phosphate + phosphate + H(+). Catalyzes the dephosphorylation of undecaprenyl diphosphate (UPP). Confers resistance to bacitracin. This is Undecaprenyl-diphosphatase 2 from Bacillus anthracis.